The chain runs to 404 residues: Pyrophosphate--fructose 6-phosphate 1-phosphotransferase (404 aa).

Gly-12 serves as a coordination point for diphosphate. Residue Asp-121 coordinates Mg(2+). Substrate-binding positions include 149-151 (TID), 194-196 (MGR), Glu-266, and 323-326 (YFSR). Residue Asp-151 is the Proton acceptor of the active site.

This sequence belongs to the phosphofructokinase type A (PFKA) family. PPi-dependent PFK group II subfamily. Clade 'P' sub-subfamily. In terms of assembly, homodimer. It depends on Mg(2+) as a cofactor.

It is found in the cytoplasm. It carries out the reaction beta-D-fructose 6-phosphate + diphosphate = beta-D-fructose 1,6-bisphosphate + phosphate + H(+). The protein operates within carbohydrate degradation; glycolysis; D-glyceraldehyde 3-phosphate and glycerone phosphate from D-glucose: step 3/4. Non-allosteric. Catalyzes the phosphorylation of D-fructose 6-phosphate, the first committing step of glycolysis. Uses inorganic phosphate (PPi) as phosphoryl donor instead of ATP like common ATP-dependent phosphofructokinases (ATP-PFKs), which renders the reaction reversible, and can thus function both in glycolysis and gluconeogenesis. Consistently, PPi-PFK can replace the enzymes of both the forward (ATP-PFK) and reverse (fructose-bisphosphatase (FBPase)) reactions. The sequence is that of Pyrophosphate--fructose 6-phosphate 1-phosphotransferase from Propionibacterium freudenreichii subsp. shermanii (strain ATCC 9614 / DSM 4902 / CIP 103027 / NCIMB 8099 / CIRM-BIA1).